Here is a 125-residue protein sequence, read N- to C-terminus: MINFGMDIQILLSIIHKFYKIIFTPVNLSLFFCFLVLYMIYSYVKDKKSKRYFDYRVNLYIVIGFWTRFGIRFGIRFLIFILKYIFYFIFDILCYIYWFIFSIFLSLIFNIFIYVKIILLYIVFN.

The protein resides in the plastid. This is an uncharacterized protein from Euglena longa (Euglenophycean alga).